Here is a 612-residue protein sequence, read N- to C-terminus: Dihydroxy-acid dehydratase (612 aa).

A Mg(2+)-binding site is contributed by Asp81. [2Fe-2S] cluster is bound at residue Cys122. Residues Asp123 and Lys124 each coordinate Mg(2+). Lys124 is subject to N6-carboxylysine. Position 195 (Cys195) interacts with [2Fe-2S] cluster. Position 492 (Glu492) interacts with Mg(2+). Ser518 (proton acceptor) is an active-site residue.

This sequence belongs to the IlvD/Edd family. Homodimer. The cofactor is [2Fe-2S] cluster. Mg(2+) is required as a cofactor.

It catalyses the reaction (2R)-2,3-dihydroxy-3-methylbutanoate = 3-methyl-2-oxobutanoate + H2O. It carries out the reaction (2R,3R)-2,3-dihydroxy-3-methylpentanoate = (S)-3-methyl-2-oxopentanoate + H2O. It functions in the pathway amino-acid biosynthesis; L-isoleucine biosynthesis; L-isoleucine from 2-oxobutanoate: step 3/4. Its pathway is amino-acid biosynthesis; L-valine biosynthesis; L-valine from pyruvate: step 3/4. Its function is as follows. Functions in the biosynthesis of branched-chain amino acids. Catalyzes the dehydration of (2R,3R)-2,3-dihydroxy-3-methylpentanoate (2,3-dihydroxy-3-methylvalerate) into 2-oxo-3-methylpentanoate (2-oxo-3-methylvalerate) and of (2R)-2,3-dihydroxy-3-methylbutanoate (2,3-dihydroxyisovalerate) into 2-oxo-3-methylbutanoate (2-oxoisovalerate), the penultimate precursor to L-isoleucine and L-valine, respectively. The polypeptide is Dihydroxy-acid dehydratase (Kocuria rhizophila (strain ATCC 9341 / DSM 348 / NBRC 103217 / DC2201)).